A 299-amino-acid chain; its full sequence is MAEEQARHVKNGLECIRALKAEPIGSLAIEEAMAAWSEISDNPGQERATCREEKAGSSGLSKPCLSAIGSTEGGAPRIRGQGPGESDDDAETLGIPPRNLQASSTGLQCYYVYDHSGEAVKGIQDADSIMVQSGLDGDSTLSGGDNESENSDVDIGEPDTEGYAITDRGSAPISMGFRASDVETAEGGEIHELLRLQSRGNNFPKLGKTLNVPPPPDPGRASTSGTPIKKGHRREISLIWNGDRVFIDRWCNPMCSKVTLGTIRARCTCGECPRVCEQCRTDTGVDTRIWYHNLPEIPE.

The segment at 41–99 (DNPGQERATCREEKAGSSGLSKPCLSAIGSTEGGAPRIRGQGPGESDDDAETLGIPPRN) is disordered. Residues 110–120 (YYVYDHSGEAV) are interaction with host STAT1. A compositionally biased stretch (low complexity) spans 134–145 (GLDGDSTLSGGD). Positions 134-162 (GLDGDSTLSGGDNESENSDVDIGEPDTEG) are disordered. Residues 146 to 160 (NESENSDVDIGEPDT) show a composition bias toward acidic residues. Zn(2+)-binding residues include histidine 232, cysteine 251, cysteine 255, cysteine 267, cysteine 269, cysteine 272, cysteine 276, and cysteine 279.

Belongs to the paramyxoviruses V protein family. In terms of assembly, interacts with host IFIH1/MDA5 and DHX58/LGP2; these interactions are involved in the inhibition of the host type I interferon signaling pathway. Interacts with host TYK2; this interaction inhibits the type I interferon signaling pathway without affecting the type II pathway. Interacts with host IRF7; this interaction inhibits IRF7 translocation to the nucleus. Interacts with host CHUK. Interacts with host RELA/p65; this interaction inhibits the nuclear translocation of NF-KappaB. Interacts (via N-terminus) with host STAT1 and JAK1; these interactions inhibit STAT1 phosphorylation by Jak1 and thereby the type I interferon signaling pathway. Interacts (via C-terminus) with host STAT2; this interaction is involved in the inhibition of the host type I interferon signaling pathway. Forms a complex with host PPP1CA and PPP1CC; this interaction prevents dephosphorylation of host IFIH1/MDA5 and leads to the inhibition of the host type I interferon signaling pathway. Interacts with host IRF9; this interaction prevents the binding of IRF9 to STAT2 and thereby the type I interferon signaling pathway.

The protein localises to the host cytoplasm. Its function is as follows. Plays an essential role in the inhibition of host immune response. Prevents the establishment of cellular antiviral state by blocking interferon-alpha/beta (IFN-alpha/beta) production and signaling pathway. Interacts with host IFIH1/MDA5 and DHX58/LGP2 to inhibit the transduction pathway involved in the activation of IFN-beta promoter, thus protecting the virus against cell antiviral state. Blocks the type I interferon signaling pathway by interacting with host TYK2 and thereby inhibiting downstream STAT1 and STAT2 phosphorylation. Moderately affects the type II interferon signaling. The sequence is that of Non-structural protein V (P/V) from Measles virus (strain Edmonston-Schwarz vaccine) (MeV).